Consider the following 527-residue polypeptide: Protein SDS24 (527 aa).

Low complexity-rich tracts occupy residues 1-22 (MAST…LPTS) and 55-74 (TPPT…TPAP). Residues 1 to 75 (MASTSNTFPP…PGCAATPAPL (75 aa)) form a disordered region. Ser94 is modified (phosphoserine). CBS domains follow at residues 114–175 (IEQN…KITV), 198–256 (LTPK…NARS), 283–342 (TSRQ…QYPL), and 443–512 (LNSH…GNKE). Over residues 424 to 447 (AQSSANGATPMSKSSSSTSLNSHS) the composition is skewed to low complexity. 2 disordered regions span residues 424–478 (AQSS…TNTP) and 508–527 (TGNK…SIAM). Phosphoserine is present on residues Ser458 and Ser524.

It belongs to the SDS23 family.

The protein resides in the cytoplasm. It is found in the nucleus. Functionally, involved in DNA replication and cell separation during budding. This Saccharomyces cerevisiae (strain YJM789) (Baker's yeast) protein is Protein SDS24 (SDS24).